A 406-amino-acid polypeptide reads, in one-letter code: 4-hydroxy-3-methylbut-2-en-1-yl diphosphate synthase (ferredoxin) (406 aa).

[4Fe-4S] cluster-binding residues include cysteine 315, cysteine 318, cysteine 349, and glutamate 356.

It belongs to the IspG family. Requires [4Fe-4S] cluster as cofactor.

It carries out the reaction (2E)-4-hydroxy-3-methylbut-2-enyl diphosphate + 2 oxidized [2Fe-2S]-[ferredoxin] + H2O = 2-C-methyl-D-erythritol 2,4-cyclic diphosphate + 2 reduced [2Fe-2S]-[ferredoxin] + H(+). The protein operates within isoprenoid biosynthesis; isopentenyl diphosphate biosynthesis via DXP pathway; isopentenyl diphosphate from 1-deoxy-D-xylulose 5-phosphate: step 5/6. Functionally, converts 2C-methyl-D-erythritol 2,4-cyclodiphosphate (ME-2,4cPP) into 1-hydroxy-2-methyl-2-(E)-butenyl 4-diphosphate. The chain is 4-hydroxy-3-methylbut-2-en-1-yl diphosphate synthase (ferredoxin) from Gloeothece citriformis (strain PCC 7424) (Cyanothece sp. (strain PCC 7424)).